A 340-amino-acid chain; its full sequence is Arginase 1, mitochondrial (340 aa).

The N-terminal 24 residues, 1-24 (MGGVAAGTRWIHHVRRLSAAKVSA), are a transit peptide targeting the mitochondrion. Residues histidine 159, aspartate 183, histidine 185, and aspartate 187 each contribute to the Mn(2+) site. Substrate contacts are provided by residues 185–189 (HPDIY) and 193–195 (EGN). 2 residues coordinate Mn(2+): aspartate 268 and aspartate 270. Glutamate 311 is a substrate binding site.

The protein belongs to the arginase family. Mn(2+) is required as a cofactor.

It localises to the mitochondrion. It catalyses the reaction L-arginine + H2O = urea + L-ornithine. It functions in the pathway nitrogen metabolism; urea cycle; L-ornithine and urea from L-arginine: step 1/1. Its function is as follows. Catalyzes the hydrolysis of L-arginine to urea and L-ornithine. The latter can be utilized in the urea cycle or as a precursor for the synthesis of both polyamines and proline. This chain is Arginase 1, mitochondrial (ARG1), found in Oryza sativa subsp. japonica (Rice).